A 465-amino-acid polypeptide reads, in one-letter code: Gamma-aminobutyric acid receptor subunit rho-2 (465 aa).

The signal sequence occupies residues Met-1–Ser-20. At Arg-21–His-260 the chain is on the extracellular side. Arg-105 serves as a coordination point for 4-aminobutanoate. N-linked (GlcNAc...) asparagine glycosylation is present at Asn-120. Residue Ser-169 participates in 4-aminobutanoate binding. A disulfide bond links Cys-178 and Cys-192. Glu-197 contributes to the 4-aminobutanoate binding site. Asn-254 is a glycosylation site (N-linked (GlcNAc...) asparagine). The chain crosses the membrane as a helical span at residues Ile-261–Val-281. Over Ser-282–Arg-293 the chain is Cytoplasmic. A helical membrane pass occupies residues Val-294–Ser-314. Topologically, residues Met-315–Asp-325 are extracellular. Residues Ile-326–Asn-346 form a helical membrane-spanning segment. At Tyr-347 to Tyr-444 the chain is on the cytoplasmic side. The helical transmembrane segment at Ser-445 to Ala-465 threads the bilayer.

The protein belongs to the ligand-gated ion channel (TC 1.A.9) family. Gamma-aminobutyric acid receptor (TC 1.A.9.5) subfamily. GABRR2 sub-subfamily. As to quaternary structure, three rho subunits (rho-1/GBRR1, rho-2/GBRR2 and rho-3/GBRR3) coassemble either to form functional homopentamers or heteropentamers. Rho-2 is unable to form a functional homopentamer. Interacts with SQSTM1.

It is found in the postsynaptic cell membrane. The protein localises to the cell membrane. The catalysed reaction is chloride(in) = chloride(out). Its function is as follows. Rho subunit of the pentameric ligand-gated chloride channels responsible for mediating the effects of gamma-aminobutyric acid (GABA), the major inhibitory neurotransmitter in the brain. Rho-containing GABA-gated chloride channels are a subclass of GABA(A) receptors (GABAARs) entirely composed of rho subunits, where GABA molecules bind at the rho intersubunit interfaces. When activated by GABA, rho-GABAARs selectively allow the flow of chloride anions across the cell membrane down their electrochemical gradient. Rho-2 GABAARs may contribute to the regulation of glial development in the cerebellum by controlling extrasynaptic transmission. Rho-2 GABAARs are also involved in neuronal tonic (extrasynaptic) and phasic (synaptic) transmission in the Purkinje neurons of the cerebellum. Rho-2 GABAARs expressed in retina may play a role in retinal neurotransmission. The chain is Gamma-aminobutyric acid receptor subunit rho-2 (GABRR2) from Bos taurus (Bovine).